Reading from the N-terminus, the 120-residue chain is Large ribosomal subunit protein bL17 (120 aa).

This sequence belongs to the bacterial ribosomal protein bL17 family. As to quaternary structure, part of the 50S ribosomal subunit. Contacts protein L32.

The sequence is that of Large ribosomal subunit protein bL17 from Shouchella clausii (strain KSM-K16) (Alkalihalobacillus clausii).